The sequence spans 94 residues: ESAT-6-like protein EsxO (94 aa).

This sequence belongs to the WXG100 family. ESAT-6 subfamily. In terms of assembly, forms a complex with EsxP.

It localises to the secreted. The polypeptide is ESAT-6-like protein EsxO (Mycobacterium tuberculosis (strain CDC 1551 / Oshkosh)).